Here is a 446-residue protein sequence, read N- to C-terminus: Phosphoglucosamine mutase (446 aa).

The Phosphoserine intermediate role is filled by Ser-101. 4 residues coordinate Mg(2+): Ser-101, Asp-240, Asp-242, and Asp-244. At Ser-101 the chain carries Phosphoserine.

This sequence belongs to the phosphohexose mutase family. The cofactor is Mg(2+). In terms of processing, activated by phosphorylation.

It carries out the reaction alpha-D-glucosamine 1-phosphate = D-glucosamine 6-phosphate. Catalyzes the conversion of glucosamine-6-phosphate to glucosamine-1-phosphate. This Pseudomonas putida (strain ATCC 47054 / DSM 6125 / CFBP 8728 / NCIMB 11950 / KT2440) protein is Phosphoglucosamine mutase.